Reading from the N-terminus, the 623-residue chain is ATP-dependent zinc metalloprotease FtsH (623 aa).

The Cytoplasmic segment spans residues 1–7 (MNQSFWR). A helical membrane pass occupies residues 8–28 (PLFAILLFMLVFHLTNIFFAQ). Residues 29-117 (QGAQVAQISY…EVSALSTETP (89 aa)) are Periplasmic-facing. The helical transmembrane segment at 118-138 (LLLNALIYVAPWVILIAIWWV) threads the bilayer. Residues 139 to 623 (GMRSMRSQGP…SLNTAQAPPP (485 aa)) are Cytoplasmic-facing. ATP is bound at residue 214–221 (GPPGTGKT). His435 serves as a coordination point for Zn(2+). Residue Glu436 is part of the active site. Residues His439 and Asp511 each coordinate Zn(2+).

It in the central section; belongs to the AAA ATPase family. In the C-terminal section; belongs to the peptidase M41 family. Homohexamer. The cofactor is Zn(2+).

The protein localises to the cell inner membrane. Acts as a processive, ATP-dependent zinc metallopeptidase for both cytoplasmic and membrane proteins. Plays a role in the quality control of integral membrane proteins. This chain is ATP-dependent zinc metalloprotease FtsH, found in Pelobacter propionicus (strain DSM 2379 / NBRC 103807 / OttBd1).